We begin with the raw amino-acid sequence, 500 residues long: Protein DETOXIFICATION 29 (500 aa).

12 consecutive transmembrane segments (helical) span residues 67–87, 91–111, 132–152, 161–181, 197–217, 227–247, 277–297, 302–322, 349–369, 393–413, 419–439, and 449–469; these read GAIT…AVSV, VVAG…ETLC, VILN…APIL, ISSA…AYAI, VMAV…WFVI, LAVV…VYIF, AVML…AGYL, ISVA…MIAI, LVAV…LLIF, ILAL…VAVG, VVAY…GLLL, and GIWC…TWMI.

Belongs to the multi antimicrobial extrusion (MATE) (TC 2.A.66.1) family.

It is found in the vacuole membrane. The chain is Protein DETOXIFICATION 29 from Arabidopsis thaliana (Mouse-ear cress).